Consider the following 181-residue polypeptide: Type II secretion system protein H (181 aa).

Positions M1–G5 are cleaved as a propeptide — leader sequence. F6 carries the post-translational modification N-methylphenylalanine. Residues F6–I29 form a helical membrane-spanning segment.

Belongs to the GSP H family. Type II secretion is composed of four main components: the outer membrane complex, the inner membrane complex, the cytoplasmic secretion ATPase and the periplasm-spanning pseudopilus. Interacts with core component OutG. In terms of processing, cleaved by prepilin peptidase. Methylated by prepilin peptidase at the amino group of the N-terminal phenylalanine once the leader sequence is cleaved by prepilin peptidase.

The protein resides in the cell inner membrane. Its function is as follows. Component of the type II secretion system required for the energy-dependent secretion of extracellular factors such as proteases and toxins from the periplasm. Part of the pseudopilus tip complex that is critical for the recognition and binding of secretion substrates. This Dickeya chrysanthemi (Pectobacterium chrysanthemi) protein is Type II secretion system protein H (outH).